The sequence spans 179 residues: Large ribosomal subunit protein uL6 (179 aa).

This sequence belongs to the universal ribosomal protein uL6 family. Part of the 50S ribosomal subunit.

This protein binds to the 23S rRNA, and is important in its secondary structure. It is located near the subunit interface in the base of the L7/L12 stalk, and near the tRNA binding site of the peptidyltransferase center. In Prochlorococcus marinus (strain MIT 9515), this protein is Large ribosomal subunit protein uL6.